Consider the following 426-residue polypeptide: Cuticle-degrading serine protease (426 aa).

The signal sequence occupies residues 1 to 21; sequence MLTNGLISLLAIAGLATNAFA. Residues 22 to 123 constitute a propeptide that is removed on maturation; that stretch reads GPIRKVSNAG…VEQDTVVTTY (102 aa). The 84-residue stretch at 39–122 folds into the Inhibitor I9 domain; it reads KYIVVLKKGL…YVEQDTVVTT (84 aa). Residues 130-426 form the Peptidase S8 domain; the sequence is TWGLDRISHE…TNHQVTIVAS (297 aa). The active-site Charge relay system is Asp-164. The N-linked (GlcNAc...) asparagine glycan is linked to Asn-178. The Charge relay system role is filled by His-200. N-linked (GlcNAc...) asparagine glycosylation occurs at Asn-252. The Charge relay system role is filled by Ser-353.

It belongs to the peptidase S8 family.

The protein resides in the secreted. Inhibited by PMSF, SSI, the peptide Phe-Val and by Phe, but not by EDTA. Its function is as follows. Hydrolyzes gelatin, casein, the chromogenic substrate azocoll and the cuticle of the nematode P.redivivus. Immobilizes P.redivivus. The chain is Cuticle-degrading serine protease from Orbilia oligospora (Nematode-trapping fungus).